Consider the following 223-residue polypeptide: Cytidylate kinase (223 aa).

12–20 (GPAGSGKST) lines the ATP pocket.

This sequence belongs to the cytidylate kinase family. Type 1 subfamily.

Its subcellular location is the cytoplasm. The enzyme catalyses CMP + ATP = CDP + ADP. It catalyses the reaction dCMP + ATP = dCDP + ADP. This chain is Cytidylate kinase, found in Aster yellows witches'-broom phytoplasma (strain AYWB).